The primary structure comprises 198 residues: 3-isopropylmalate dehydratase small subunit (198 aa).

It belongs to the LeuD family. LeuD type 1 subfamily. Heterodimer of LeuC and LeuD.

The catalysed reaction is (2R,3S)-3-isopropylmalate = (2S)-2-isopropylmalate. Its pathway is amino-acid biosynthesis; L-leucine biosynthesis; L-leucine from 3-methyl-2-oxobutanoate: step 2/4. Catalyzes the isomerization between 2-isopropylmalate and 3-isopropylmalate, via the formation of 2-isopropylmaleate. The sequence is that of 3-isopropylmalate dehydratase small subunit from Mycobacterium leprae (strain Br4923).